A 343-amino-acid chain; its full sequence is Galactoside alpha-(1,2)-fucosyltransferase 2 (343 aa).

Topologically, residues 1–14 (MLVVQMPFSFPVAH) are cytoplasmic. The helical; Signal-anchor for type II membrane protein transmembrane segment at 15–28 (FILFVFTVSTIFHI) threads the bilayer. Residues 29–343 (QQRLAKIQAM…AADLSPLLKH (315 aa)) are Lumenal-facing. N-linked (GlcNAc...) asparagine glycosylation is found at Asn-188, Asn-282, and Asn-308.

It belongs to the glycosyltransferase 11 family.

It localises to the golgi apparatus. The protein localises to the golgi stack membrane. The catalysed reaction is a beta-D-galactosyl-(1-&gt;3)-N-acetyl-beta-D-glucosaminyl derivative + GDP-beta-L-fucose = an alpha-L-Fuc-(1-&gt;2)-beta-D-Gal-(1-&gt;3)-beta-D-GlcNAc derivative + GDP + H(+). It catalyses the reaction a beta-D-galactosyl-(1-&gt;4)-N-acetyl-beta-D-glucosaminyl derivative + GDP-beta-L-fucose = an alpha-L-Fuc-(1-&gt;2)-beta-D-Gal-(1-&gt;4)-beta-D-GlcNAc derivative + GDP + H(+). It carries out the reaction a neolactoside nLc4Cer + GDP-beta-L-fucose = a neolactoside IV(2)-alpha-Fuc-nLc4Cer + GDP + H(+). The enzyme catalyses a neolactoside nLc4Cer(d18:1(4E)) + GDP-beta-L-fucose = a neolactoside IV(2)-alpha-Fuc-nLc4Cer(d18:1(4E)) + GDP + H(+). The catalysed reaction is a ganglioside GM1 + GDP-beta-L-fucose = a ganglioside Fuc-GM1 + GDP + H(+). It catalyses the reaction a ganglioside GA1 + GDP-beta-L-fucose = a ganglioside Fuc-GA1 + GDP + H(+). It carries out the reaction Lc4Cer + GDP-beta-L-fucose = alpha-L-fucosyl-(1-&gt;2)-beta-D-galactosyl-(1-&gt;3)-N-acetyl-beta-D-glucosaminyl-(1-&gt;3)-beta-D-galactosyl-(1-&gt;4)-beta-D-glucosyl-(1&lt;-&gt;1')-ceramide + GDP + H(+). The enzyme catalyses a beta-D-Gal-(1-&gt;3)-beta-D-GlcNAc-(1-&gt;3)-beta-D-Gal-(1-&gt;4)-beta-D-Glc-(1&lt;-&gt;1')-Cer(d18:1(4E)) + GDP-beta-L-fucose = alpha-L-fucosyl-(1-&gt;2)- beta-D-galactosyl-(1-&gt;3)-N-acetyl-beta-D-glucosaminyl-(1-&gt;3)-beta-D-galactosyl-(1-&gt;4)-beta-D-glucosyl-(1&lt;-&gt;1')-N-acylsphing-4-enine + GDP + H(+). The catalysed reaction is a ganglioside GD1b + GDP-beta-L-fucose = a ganglioside Fuc-GD1b + GDP + H(+). It catalyses the reaction a ganglioside GM1 (d18:1(4E)) + GDP-beta-L-fucose = a ganglioside Fuc-GM1 (d18:1(4E)) + GDP + H(+). It carries out the reaction a globoside GalGb4Cer (d18:1(4E)) + GDP-beta-L-fucose = a globoside Globo-H (d18:1(4E)) + GDP + H(+). The enzyme catalyses a lactoside III(4)-a-Fuc-Lc4Cer + GDP-beta-L-fucose = a lactoside IV(2),III(4)-a-[Fuc]2-Lc4Cer + GDP + H(+). The catalysed reaction is beta-D-galactosyl-(1-&gt;3)-N-acetyl-D-galactosamine + GDP-beta-L-fucose = alpha-L-fucosyl-(1-&gt;2)-beta-D-galactosyl-(1-&gt;3)-N-acetyl-D-galactosamine + GDP + H(+). The protein operates within protein modification; protein glycosylation. Catalyzes the transfer of L-fucose, from a guanosine diphosphate-beta-L-fucose, to the terminal galactose on both O- and N-linked glycans chains of cell surface glycoproteins and glycolipids and the resulting epitope regulates several processes such as cell-cell interaction including host-microbe interaction, cell surface expression and cell proliferation. Preferentially fucosylates gangliosides GA1 and GM1 in the antrum, cecum and colon and in the female reproductive organs. Fucosylated host glycoproteins or glycolipids mediate interaction with intestinal microbiota influencing its composition. Creates a soluble precursor oligosaccharide FuC-alpha ((1,2)Galbeta-) called the H antigen which is an essential substrate for the final step in the soluble ABO blood group antigen synthesis pathway. In Pongo pygmaeus (Bornean orangutan), this protein is Galactoside alpha-(1,2)-fucosyltransferase 2.